The chain runs to 460 residues: ESX-1 secretion-associated protein EspB (460 aa).

Disordered regions lie at residues 92-116 (LDND…SAEL), 303-335 (PSDG…PADT), and 405-441 (LGGG…TEDR).

In terms of processing, cleaved in the C-terminal region by MycP1.

Its subcellular location is the secreted. The polypeptide is ESX-1 secretion-associated protein EspB (Mycobacterium tuberculosis (strain CDC 1551 / Oshkosh)).